Consider the following 886-residue polypeptide: Isoleucine--tRNA ligase (886 aa).

The short motif at 60-70 (PYANGDIHIGH) is the 'HIGH' region element. Glu-546 contacts L-isoleucyl-5'-AMP. Positions 587–591 (KMSKS) match the 'KMSKS' region motif. Lys-590 is a binding site for ATP. The Zn(2+) site is built by Cys-856, Cys-859, Cys-870, and Cys-873.

It belongs to the class-I aminoacyl-tRNA synthetase family. IleS type 1 subfamily. As to quaternary structure, monomer. The cofactor is Zn(2+).

Its subcellular location is the cytoplasm. The enzyme catalyses tRNA(Ile) + L-isoleucine + ATP = L-isoleucyl-tRNA(Ile) + AMP + diphosphate. In terms of biological role, catalyzes the attachment of isoleucine to tRNA(Ile). As IleRS can inadvertently accommodate and process structurally similar amino acids such as valine, to avoid such errors it has two additional distinct tRNA(Ile)-dependent editing activities. One activity is designated as 'pretransfer' editing and involves the hydrolysis of activated Val-AMP. The other activity is designated 'posttransfer' editing and involves deacylation of mischarged Val-tRNA(Ile). The sequence is that of Isoleucine--tRNA ligase from Mesomycoplasma hyopneumoniae (strain 7448) (Mycoplasma hyopneumoniae).